Consider the following 337-residue polypeptide: tRNA N6-adenosine threonylcarbamoyltransferase (337 aa).

Residues His111 and His115 each contribute to the Fe cation site. Substrate is bound by residues 134-138, Asp167, Gly180, and Asn272; that span reads LVSGG. Asp300 is a Fe cation binding site.

The protein belongs to the KAE1 / TsaD family. It depends on Fe(2+) as a cofactor.

The protein localises to the cytoplasm. The enzyme catalyses L-threonylcarbamoyladenylate + adenosine(37) in tRNA = N(6)-L-threonylcarbamoyladenosine(37) in tRNA + AMP + H(+). Its function is as follows. Required for the formation of a threonylcarbamoyl group on adenosine at position 37 (t(6)A37) in tRNAs that read codons beginning with adenine. Is involved in the transfer of the threonylcarbamoyl moiety of threonylcarbamoyl-AMP (TC-AMP) to the N6 group of A37, together with TsaE and TsaB. TsaD likely plays a direct catalytic role in this reaction. In Salmonella agona (strain SL483), this protein is tRNA N6-adenosine threonylcarbamoyltransferase.